The primary structure comprises 244 residues: 3-oxoacyl-[acyl-carrier-protein] reductase FabG (244 aa).

Residues Gly12–Arg15 and Thr37 each bind NADP(+). Residues Gly50 and Gly53 each contribute to the Ca(2+) site. NADP(+) is bound by residues Asn59–Val60 and Asn86. Ser138 is a substrate binding site. Asn145 serves as a coordination point for Ca(2+). The active-site Proton acceptor is the Tyr151. Residues Tyr151–Lys155 and Ile184 contribute to the NADP(+) site. Residues Glu233 and Thr234 each coordinate Ca(2+).

Belongs to the short-chain dehydrogenases/reductases (SDR) family. Homotetramer.

The catalysed reaction is a (3R)-hydroxyacyl-[ACP] + NADP(+) = a 3-oxoacyl-[ACP] + NADPH + H(+). The enzyme catalyses 3-oxobutanoyl-[ACP] + NADPH + H(+) = (3R)-hydroxybutanoyl-[ACP] + NADP(+). It carries out the reaction 3-oxopentanoyl-[ACP] + NADPH + H(+) = (3R)-hydroxypentanoyl-[ACP] + NADP(+). It catalyses the reaction 3-oxohexanoyl-[ACP] + NADPH + H(+) = (3R)-hydroxyhexanoyl-[ACP] + NADP(+). The catalysed reaction is 3-oxoheptanoyl-[ACP] + NADPH + H(+) = (3R)-hydroxyheptanoyl-[ACP] + NADP(+). The enzyme catalyses 3-oxooctanoyl-[ACP] + NADPH + H(+) = (3R)-hydroxyoctanoyl-[ACP] + NADP(+). It carries out the reaction 3-oxononanoyl-[ACP] + NADPH + H(+) = (3R)-hydroxynonanoyl-[ACP] + NADP(+). It catalyses the reaction 3-oxodecanoyl-[ACP] + NADPH + H(+) = (3R)-hydroxydecanoyl-[ACP] + NADP(+). The catalysed reaction is 3-oxohexadecanoyl-[ACP] + NADPH + H(+) = (3R)-hydroxyhexadecanoyl-[ACP] + NADP(+). The enzyme catalyses 3-oxo-(9Z)-hexadecenoyl-[ACP] + NADPH + H(+) = (3R)-hydroxy-(9Z)-hexadecenoyl-[ACP] + NADP(+). It carries out the reaction 4-methyl-3-oxopentanoyl-[ACP] + NADPH + H(+) = (3R)-hydroxy-4-methylpentanoyl-[ACP] + NADP(+). It catalyses the reaction 5-methyl-3-oxohexanoyl-[ACP] + NADPH + H(+) = (3R)-hydroxy-5-methylhexanoyl-[ACP] + NADP(+). The catalysed reaction is 4-methyl-3-oxohexanoyl-[ACP] + NADPH + H(+) = (3R)-hydroxy-4-methylhexanoyl-[ACP] + NADP(+). Its pathway is lipid metabolism; fatty acid biosynthesis. Its activity is regulated as follows. Inhibited by cinnamic acid derivatives. In terms of biological role, catalyzes the NADPH-dependent reduction of beta-ketoacyl-ACP substrates to beta-hydroxyacyl-ACP products, the first reductive step in the elongation cycle of fatty acid biosynthesis. The chain is 3-oxoacyl-[acyl-carrier-protein] reductase FabG (fabG) from Escherichia coli (strain K12).